Here is a 150-residue protein sequence, read N- to C-terminus: L-alanine exporter AlaE (150 aa).

4 helical membrane passes run 17–37 (FAMV…ISGM), 48–68 (LSIP…DFML), 86–106 (LVAY…VVGA), and 111–131 (IITA…FYGY).

The protein belongs to the AlaE exporter family.

It is found in the cell inner membrane. Its function is as follows. Exports L-alanine. This chain is L-alanine exporter AlaE, found in Aliivibrio fischeri (strain ATCC 700601 / ES114) (Vibrio fischeri).